The chain runs to 110 residues: Movement protein TGB2 (110 aa).

At 1-10 the chain is on the cytoplasmic side; the sequence is MSGAHHLTPP. A helical membrane pass occupies residues 11-34; that stretch reads TDYGKPVLAASIGISLALLVYTAT. At 35–76 the chain is on the lumenal side; sequence RSTLPHVGDNLHALPHGGRYVDGTKSISYFSPSASKTRDPFP. The helical transmembrane segment at 77–92 threads the bilayer; it reads FAFLLILTLSGLILLL. The Cytoplasmic segment spans residues 93–110; it reads SRRRSNPHSCPSCGTPHA.

The protein belongs to the Tymovirales TGBp2 protein family.

It localises to the host endoplasmic reticulum membrane. Its function is as follows. Plays a role in viral cell-to-cell propagation, by facilitating genome transport to neighboring plant cells through plasmosdesmata,. This is Movement protein TGB2 from Plantago asiatica (P1AMV).